The sequence spans 193 residues: Xanthine phosphoribosyltransferase (193 aa).

The xanthine site is built by leucine 20 and threonine 27. A 5-phospho-alpha-D-ribose 1-diphosphate-binding site is contributed by 128-132 (ANGQA). Lysine 156 serves as a coordination point for xanthine.

The protein belongs to the purine/pyrimidine phosphoribosyltransferase family. Xpt subfamily. Homodimer.

Its subcellular location is the cytoplasm. It carries out the reaction XMP + diphosphate = xanthine + 5-phospho-alpha-D-ribose 1-diphosphate. It participates in purine metabolism; XMP biosynthesis via salvage pathway; XMP from xanthine: step 1/1. In terms of biological role, converts the preformed base xanthine, a product of nucleic acid breakdown, to xanthosine 5'-monophosphate (XMP), so it can be reused for RNA or DNA synthesis. This Streptococcus uberis (strain ATCC BAA-854 / 0140J) protein is Xanthine phosphoribosyltransferase.